Consider the following 351-residue polypeptide: Peptide chain release factor 1 (351 aa).

N5-methylglutamine is present on Q229.

This sequence belongs to the prokaryotic/mitochondrial release factor family. Post-translationally, methylated by PrmC. Methylation increases the termination efficiency of RF1.

It localises to the cytoplasm. Peptide chain release factor 1 directs the termination of translation in response to the peptide chain termination codons UAG and UAA. The sequence is that of Peptide chain release factor 1 from Dinoroseobacter shibae (strain DSM 16493 / NCIMB 14021 / DFL 12).